We begin with the raw amino-acid sequence, 125 residues long: MAFDKDAFLTALDSMSVMELNELVKAIEEKFGVSAAAMAAPAAGGGGGAAAAVEEKTEFNVVLLEAGANKVSVIKAVRELTGLGLKEAKDLVDGAPKNVKEAVAKADAEAAVKKLVEAGAKAELK.

Belongs to the bacterial ribosomal protein bL12 family. Homodimer. Part of the ribosomal stalk of the 50S ribosomal subunit. Forms a multimeric L10(L12)X complex, where L10 forms an elongated spine to which 2 to 4 L12 dimers bind in a sequential fashion. Binds GTP-bound translation factors.

In terms of biological role, forms part of the ribosomal stalk which helps the ribosome interact with GTP-bound translation factors. Is thus essential for accurate translation. This Methylibium petroleiphilum (strain ATCC BAA-1232 / LMG 22953 / PM1) protein is Large ribosomal subunit protein bL12.